Here is a 299-residue protein sequence, read N- to C-terminus: ATP phosphoribosyltransferase (299 aa).

The protein belongs to the ATP phosphoribosyltransferase family. Long subfamily. Equilibrium between an active dimeric form, an inactive hexameric form and higher aggregates. Interconversion between the various forms is largely reversible and is influenced by the natural substrates and inhibitors of the enzyme. Mg(2+) serves as cofactor.

It localises to the cytoplasm. The enzyme catalyses 1-(5-phospho-beta-D-ribosyl)-ATP + diphosphate = 5-phospho-alpha-D-ribose 1-diphosphate + ATP. It functions in the pathway amino-acid biosynthesis; L-histidine biosynthesis; L-histidine from 5-phospho-alpha-D-ribose 1-diphosphate: step 1/9. Its activity is regulated as follows. Feedback inhibited by histidine. In terms of biological role, catalyzes the condensation of ATP and 5-phosphoribose 1-diphosphate to form N'-(5'-phosphoribosyl)-ATP (PR-ATP). Has a crucial role in the pathway because the rate of histidine biosynthesis seems to be controlled primarily by regulation of HisG enzymatic activity. In Buchnera aphidicola subsp. Acyrthosiphon pisum (strain 5A), this protein is ATP phosphoribosyltransferase.